The following is a 366-amino-acid chain: Tudor domain-containing protein 10 (366 aa).

The 74-residue stretch at 34-107 folds into the RRM domain; it reads TEVYVGNLPL…RKLFVNTSKR (74 aa). One can recognise a Tudor domain in the interval 210 to 317; the sequence is FWAMHVTEAL…PLTQPFMLEK (108 aa). A coiled-coil region spans residues 216 to 237; sequence TEALHQNMQALFSTLAQAEEQQ.

The sequence is that of Tudor domain-containing protein 10 (TDRD10) from Homo sapiens (Human).